Here is a 434-residue protein sequence, read N- to C-terminus: Enolase (434 aa).

Q166 lines the (2R)-2-phosphoglycerate pocket. Catalysis depends on E208, which acts as the Proton donor. Residues D245, E290, and D317 each coordinate Mg(2+). K342, R371, S372, and K393 together coordinate (2R)-2-phosphoglycerate. The active-site Proton acceptor is the K342.

Belongs to the enolase family. Requires Mg(2+) as cofactor.

The protein resides in the cytoplasm. It localises to the secreted. It is found in the cell surface. It catalyses the reaction (2R)-2-phosphoglycerate = phosphoenolpyruvate + H2O. The protein operates within carbohydrate degradation; glycolysis; pyruvate from D-glyceraldehyde 3-phosphate: step 4/5. In terms of biological role, catalyzes the reversible conversion of 2-phosphoglycerate (2-PG) into phosphoenolpyruvate (PEP). It is essential for the degradation of carbohydrates via glycolysis. The polypeptide is Enolase (Caldicellulosiruptor bescii (strain ATCC BAA-1888 / DSM 6725 / KCTC 15123 / Z-1320) (Anaerocellum thermophilum)).